We begin with the raw amino-acid sequence, 584 residues long: MSQRVRRNGSPTPAGALAGGAVGPPGGPGSRLQPMRATVPFQLKQQQQHGSPTRGGGGGGNNGGNGGASGPSGGGGSGGPRTASRSTSPTRGGGGSAAARTSPTVATQTGASVTSTRGTSPTRGTAPGARSSPPRPQPPPPLLGTVSSPSSSPTHLWPSEVIAAPPSARVRHRRRSPEQGRPSAEKRSPSAPVCKAGDKTHPPSSSSSSIIRRTSSLDTLAAPYLAGHWPRDIRGQAAPCMRDKATQTESAWAEEYEKKKGSHKRSSSWGSTEQLKEIAKLRQQLQRSKHSSRHHRDKERQSPFHGNHAAINQSQAPAPKSTLVPAGPITKSSGSRFRNSVEGLNQEIEIIIKETGEKEEQLIPQDIPDGHRAPPPLAQRSSSTRSIDTQTPGGADKGSNNSSRSQSVSPTSFLTISNEGSEESPCSADDLLADPRDKENGNNSPLPKYATSPKPNNSYMFKREPPEGCERVKVFEECSPKQLHEIPAFYCPDKNKVNFIPKSGSAFCLVSILKPLLPTPDLTLKGSGHSLTVTTGMTTTLLQPISMASLSTNTEQERVSRGTSTVLPSASLHAPPEPIEEAEG.

The interval M1–T214 is disordered. S10 bears the Phosphoserine mark. The segment covering T53–G79 has biased composition (gly residues). Residues P80–T90 are compositionally biased toward low complexity. Position 102 is a phosphoserine (S102). The segment covering T114 to S132 has biased composition (low complexity). Pro residues predominate over residues P133 to L142. Polar residues predominate over residues T145–T154. The span at S204 to T214 shows a compositional bias: low complexity. S206, S215, S216, and S268 each carry phosphoserine. Disordered regions lie at residues G227–F461 and S551–G584. A compositionally biased stretch (basic residues) spans R287–D297. Residue S340 is modified to Phosphoserine. The segment covering I350–Q361 has biased composition (basic and acidic residues). Residues Q379–P392 show a composition bias toward polar residues. Position 386 is a phosphoserine (S386). Over residues S399 to S412 the composition is skewed to low complexity. Phosphoserine occurs at positions 444 and 452.

The chain is Protein FAM117B (Fam117b) from Mus musculus (Mouse).